Consider the following 67-residue polypeptide: DNA gyrase inhibitor YacG (67 aa).

Zn(2+)-binding residues include Cys-9, Cys-12, Cys-28, and Cys-32. Positions 46–67 are disordered; sequence RIPSSGDLNDSDDWSEQPLDRQ.

It belongs to the DNA gyrase inhibitor YacG family. In terms of assembly, interacts with GyrB. It depends on Zn(2+) as a cofactor.

Its function is as follows. Inhibits all the catalytic activities of DNA gyrase by preventing its interaction with DNA. Acts by binding directly to the C-terminal domain of GyrB, which probably disrupts DNA binding by the gyrase. The chain is DNA gyrase inhibitor YacG from Erwinia tasmaniensis (strain DSM 17950 / CFBP 7177 / CIP 109463 / NCPPB 4357 / Et1/99).